A 122-amino-acid chain; its full sequence is Large ribosomal subunit protein uL14 (122 aa).

Belongs to the universal ribosomal protein uL14 family. In terms of assembly, part of the 50S ribosomal subunit. Forms a cluster with proteins L3 and L19. In the 70S ribosome, L14 and L19 interact and together make contacts with the 16S rRNA in bridges B5 and B8.

Functionally, binds to 23S rRNA. Forms part of two intersubunit bridges in the 70S ribosome. The sequence is that of Large ribosomal subunit protein uL14 from Ruegeria pomeroyi (strain ATCC 700808 / DSM 15171 / DSS-3) (Silicibacter pomeroyi).